Here is a 373-residue protein sequence, read N- to C-terminus: sn-glycerol-3-phosphate import ATP-binding protein UgpC 2 (373 aa).

Residues 4–234 (IDIRQVRKSY…PASTFVASFI (231 aa)) enclose the ABC transporter domain. Residue 36–43 (GPSGCGKS) participates in ATP binding.

Belongs to the ABC transporter superfamily. sn-glycerol-3-phosphate importer (TC 3.A.1.1.3) family. As to quaternary structure, the complex is composed of two ATP-binding proteins (UgpC), two transmembrane proteins (UgpA and UgpE) and a solute-binding protein (UgpB).

Its subcellular location is the cell inner membrane. The catalysed reaction is sn-glycerol 3-phosphate(out) + ATP + H2O = sn-glycerol 3-phosphate(in) + ADP + phosphate + H(+). Its function is as follows. Part of the ABC transporter complex UgpBAEC involved in sn-glycerol-3-phosphate (G3P) import. Responsible for energy coupling to the transport system. The chain is sn-glycerol-3-phosphate import ATP-binding protein UgpC 2 from Agrobacterium fabrum (strain C58 / ATCC 33970) (Agrobacterium tumefaciens (strain C58)).